The chain runs to 1201 residues: Vitamin B12-dependent ribonucleotide reductase (1201 aa).

Substrate-binding positions include S153, 198-199, G230, 482-486, and 683-687; these read AC, NPCSE, and PTGTI. A disulfide bridge connects residues C199 and C495. N482 functions as the Proton acceptor in the catalytic mechanism. C484 acts as the Cysteine radical intermediate in catalysis. Residue E486 is the Proton acceptor of the active site. A compositionally biased stretch (basic and acidic residues) spans 1100–1118; that stretch reads DEIGSKRATAESNGQEKET. The segment at 1100–1120 is disordered; sequence DEIGSKRATAESNGQEKETLS.

It belongs to the ribonucleoside diphosphate reductase class-2 family. Adenosylcob(III)alamin serves as cofactor.

The catalysed reaction is a 2'-deoxyribonucleoside 5'-diphosphate + [thioredoxin]-disulfide + H2O = a ribonucleoside 5'-diphosphate + [thioredoxin]-dithiol. Functionally, catalyzes the reduction of ribonucleotides to deoxyribonucleotides. May function to provide a pool of deoxyribonucleotide precursors for DNA repair during oxygen limitation and/or for immediate growth after restoration of oxygen. The protein is Vitamin B12-dependent ribonucleotide reductase (nrdJ) of Leptospira interrogans serogroup Icterohaemorrhagiae serovar Lai (strain 56601).